The chain runs to 43 residues: Potassium channel toxin gamma-KTx 4.12 (43 aa).

Intrachain disulfides connect cysteine 5-cysteine 23, cysteine 11-cysteine 34, cysteine 20-cysteine 39, and cysteine 24-cysteine 41.

As to expression, expressed by the venom gland.

It localises to the secreted. Its function is as follows. Reversibly blocks Kv11/ERG potassium channels. Is less toxic than ergtoxin (AC Q86QT3). In Centruroides sculpturatus (Arizona bark scorpion), this protein is Potassium channel toxin gamma-KTx 4.12.